The following is a 74-amino-acid chain: Exodeoxyribonuclease 7 small subunit (74 aa).

It belongs to the XseB family. As to quaternary structure, heterooligomer composed of large and small subunits.

It localises to the cytoplasm. The enzyme catalyses Exonucleolytic cleavage in either 5'- to 3'- or 3'- to 5'-direction to yield nucleoside 5'-phosphates.. Functionally, bidirectionally degrades single-stranded DNA into large acid-insoluble oligonucleotides, which are then degraded further into small acid-soluble oligonucleotides. The chain is Exodeoxyribonuclease 7 small subunit from Symbiobacterium thermophilum (strain DSM 24528 / JCM 14929 / IAM 14863 / T).